The chain runs to 535 residues: MAKKKERAVNVSGKPRHSLDVNRANDKKGAGGGAGGGGGGRSAATVRRLKMYKMRPLRDRGGKILKHDLQSKELPNTRIEPDRRWFGNTRVVNQKELEFFREELQSRLSNNYNVILKERKLPLSLLQDHQKQARAHLLDTEPFEHAFGPKGKRKRPKLMALDYESLLKKADDSQGAFEDKHATAKLLKEEEEDGLRDLVRHTMFEKGQSKRIWGELYKVIDSSDVVVQVLDARDPMGTRCYHLEKHLKENAKHKHLVFLLNKCDLVPAWATKGWLRTLSKDYPTLAFHASINSSFGKGSLLSVLRQFARLKSDKQAISVGFVGYPNVGKSSVINTLRSKSVCKVAPIPGETKVWQYITLTKRIFLIDCPGVVYQNNDSETDIVLKGVVRVTNLADASEHIGEVLRRVKKEHLKRAYKIEDWVDDNDFLVQLSKTTGKLLRGGEPDLTTTAKMVLHDWQRGKIPFFVPPPQQGEDSPSETAEPVDKSDEEGVSSDRTAAAMKAIAGIISSQQQMNVPCQKEFGVTNEDSEVAEQSE.

Residues 1–42 are disordered; sequence MAKKKERAVNVSGKPRHSLDVNRANDKKGAGGGAGGGGGGRS. Basic and acidic residues predominate over residues 17-29; that stretch reads HSLDVNRANDKKG. The span at 30–41 shows a compositional bias: gly residues; that stretch reads AGGGAGGGGGGR. Residues 213 to 374 form the CP-type G domain; sequence WGELYKVIDS…LIDCPGVVYQ (162 aa). The G4 stretch occupies residues 261–264; the sequence is NKCD. Residues 290–292 are G5; that stretch reads SIN. Residues 323–330 are G1; it reads GYPNVGKS. Residues 349–353 form a G2 region; sequence GETKV. The tract at residues 367–370 is G3; sequence DCPG. The tract at residues 464 to 495 is disordered; that stretch reads FFVPPPQQGEDSPSETAEPVDKSDEEGVSSDR.

This sequence belongs to the TRAFAC class YlqF/YawG GTPase family. RsgA subfamily.

It localises to the nucleus. The protein localises to the nucleolus. In terms of biological role, GTPase involved in pre-60S ribosomal subunit maturation. This Oryza sativa subsp. indica (Rice) protein is Nuclear/nucleolar GTPase 2.